Consider the following 562-residue polypeptide: Catalase T (562 aa).

Active-site residues include His-64 and Asn-137. Residue Tyr-351 participates in heme binding.

Belongs to the catalase family. In terms of assembly, homotetramer. Heme serves as cofactor.

It is found in the cytoplasm. The enzyme catalyses 2 H2O2 = O2 + 2 H2O. In terms of biological role, occurs in almost all aerobically respiring organisms and serves to protect cells from the toxic effects of hydrogen peroxide. The sequence is that of Catalase T (CTT1) from Saccharomyces cerevisiae (strain YJM789) (Baker's yeast).